A 299-amino-acid chain; its full sequence is Diphthine methyl ester synthase 1 (299 aa).

S-adenosyl-L-methionine is bound by residues leucine 9, aspartate 85, glycine 88, serine 113–valine 114, leucine 164, leucine 222, and histidine 247.

This sequence belongs to the diphthine synthase family.

It is found in the cytoplasm. It catalyses the reaction 2-[(3S)-amino-3-carboxypropyl]-L-histidyl-[translation elongation factor 2] + 4 S-adenosyl-L-methionine = diphthine methyl ester-[translation elongation factor 2] + 4 S-adenosyl-L-homocysteine + 3 H(+). It functions in the pathway protein modification; peptidyl-diphthamide biosynthesis. S-adenosyl-L-methionine-dependent methyltransferase that catalyzes four methylations of the modified target histidine residue in translation elongation factor 2 (EF-2), to form an intermediate called diphthine methyl ester. The four successive methylation reactions represent the second step of diphthamide biosynthesis. This chain is Diphthine methyl ester synthase 1 (DPH5), found in Candida albicans (strain SC5314 / ATCC MYA-2876) (Yeast).